Consider the following 65-residue polypeptide: DNA-directed RNA polymerase subunit Rpo10 (65 aa).

4 residues coordinate Zn(2+): cysteine 7, cysteine 10, cysteine 44, and cysteine 45.

This sequence belongs to the archaeal Rpo10/eukaryotic RPB10 RNA polymerase subunit family. Part of the RNA polymerase complex. Requires Zn(2+) as cofactor.

The protein localises to the cytoplasm. The enzyme catalyses RNA(n) + a ribonucleoside 5'-triphosphate = RNA(n+1) + diphosphate. Functionally, DNA-dependent RNA polymerase (RNAP) catalyzes the transcription of DNA into RNA using the four ribonucleoside triphosphates as substrates. The protein is DNA-directed RNA polymerase subunit Rpo10 of Pyrobaculum arsenaticum (strain DSM 13514 / JCM 11321 / PZ6).